Consider the following 483-residue polypeptide: Putative (R)-citramalate synthase CimA (483 aa).

Positions 1-245 constitute a Pyruvate carboxyltransferase domain; that stretch reads MRDGEQTPGV…DTGIKHEQIY (245 aa).

Belongs to the alpha-IPM synthase/homocitrate synthase family. As to quaternary structure, homodimer.

It catalyses the reaction pyruvate + acetyl-CoA + H2O = (3R)-citramalate + CoA + H(+). It participates in amino-acid biosynthesis; L-isoleucine biosynthesis; 2-oxobutanoate from pyruvate: step 1/3. In terms of biological role, catalyzes the condensation of pyruvate and acetyl-coenzyme A to form (R)-citramalate. The chain is Putative (R)-citramalate synthase CimA from Methanosarcina mazei (strain ATCC BAA-159 / DSM 3647 / Goe1 / Go1 / JCM 11833 / OCM 88) (Methanosarcina frisia).